Reading from the N-terminus, the 137-residue chain is Small ribosomal subunit protein uS11 (137 aa).

The tract at residues 116–137 (EDVTPIPHDGTRRPGGKRGRRV) is disordered.

It belongs to the universal ribosomal protein uS11 family. In terms of assembly, part of the 30S ribosomal subunit.

In terms of biological role, located on the platform of the 30S subunit. In Methanopyrus kandleri (strain AV19 / DSM 6324 / JCM 9639 / NBRC 100938), this protein is Small ribosomal subunit protein uS11.